Here is a 135-residue protein sequence, read N- to C-terminus: Retinol-binding protein 1 (135 aa).

The tract at residues Arg22–Lys32 is important for interaction with STRA6. Residues Lys41, Met63, and Gln109 each contribute to the all-trans-retinol site.

This sequence belongs to the calycin superfamily. Fatty-acid binding protein (FABP) family. Interacts (only as retinol-free apoprotein) with STRA6.

It localises to the cytoplasm. The protein localises to the lipid droplet. Its function is as follows. Cytoplasmic retinol-binding protein. Accepts retinol from the transport protein STRA6, and thereby contributes to retinol uptake, storage and retinoid homeostasis. In Bos taurus (Bovine), this protein is Retinol-binding protein 1 (RBP1).